A 978-amino-acid chain; its full sequence is Glycine dehydrogenase (decarboxylating) (978 aa).

Position 726 is an N6-(pyridoxal phosphate)lysine (Lys726).

This sequence belongs to the GcvP family. As to quaternary structure, the glycine cleavage system is composed of four proteins: P, T, L and H. Pyridoxal 5'-phosphate is required as a cofactor.

It carries out the reaction N(6)-[(R)-lipoyl]-L-lysyl-[glycine-cleavage complex H protein] + glycine + H(+) = N(6)-[(R)-S(8)-aminomethyldihydrolipoyl]-L-lysyl-[glycine-cleavage complex H protein] + CO2. Its function is as follows. The glycine cleavage system catalyzes the degradation of glycine. The P protein binds the alpha-amino group of glycine through its pyridoxal phosphate cofactor; CO(2) is released and the remaining methylamine moiety is then transferred to the lipoamide cofactor of the H protein. The chain is Glycine dehydrogenase (decarboxylating) from Paraburkholderia phytofirmans (strain DSM 17436 / LMG 22146 / PsJN) (Burkholderia phytofirmans).